Reading from the N-terminus, the 309-residue chain is MEVTGTPSSYSNRNCTIENFKKEFYPIIYLIIFFWGALGNGFSIYVFLQTCKKSTSVNVFMLNLATSDFLFISTLPFRADYYFRGSNWIFGDLACRVMSYSLYVNMYTSIYFLTVLSVVRFLATVHPFRMFHVTSVRSAWILCGIIWVFIMASSALLLVNGQEEKDNIISCLELSPQKFKSLLIMNHIAVAVGFLLPFLTLTVCYLLIIRILLKAEIPESGPRAAHRKALTTIVIAMITFLLCFLPYHALRTLHLVTWDKDSCGDVLHKATVITLTMAAANSCFNPFLYYFAGENFKARLRAIFSKVHL.

Residues 1–26 (MEVTGTPSSYSNRNCTIENFKKEFYP) are Extracellular-facing. N-linked (GlcNAc...) asparagine glycosylation is present at Asn-14. The helical transmembrane segment at 27-47 (IIYLIIFFWGALGNGFSIYVF) threads the bilayer. Topologically, residues 48 to 56 (LQTCKKSTS) are cytoplasmic. A helical membrane pass occupies residues 57–77 (VNVFMLNLATSDFLFISTLPF). At 78 to 98 (RADYYFRGSNWIFGDLACRVM) the chain is on the extracellular side. Cys-95 and Cys-171 are disulfide-bonded. A helical transmembrane segment spans residues 99–119 (SYSLYVNMYTSIYFLTVLSVV). At 120–138 (RFLATVHPFRMFHVTSVRS) the chain is on the cytoplasmic side. The chain crosses the membrane as a helical span at residues 139 to 159 (AWILCGIIWVFIMASSALLLV). Residues 160 to 187 (NGQEEKDNIISCLELSPQKFKSLLIMNH) are Extracellular-facing. A helical transmembrane segment spans residues 188 to 208 (IAVAVGFLLPFLTLTVCYLLI). The Cytoplasmic segment spans residues 209-229 (IRILLKAEIPESGPRAAHRKA). Residues 230 to 250 (LTTIVIAMITFLLCFLPYHAL) traverse the membrane as a helical segment. The Extracellular portion of the chain corresponds to 251 to 271 (RTLHLVTWDKDSCGDVLHKAT). Residues 272-292 (VITLTMAAANSCFNPFLYYFA) form a helical membrane-spanning segment. At 293 to 309 (GENFKARLRAIFSKVHL) the chain is on the cytoplasmic side.

It belongs to the G-protein coupled receptor 1 family. Widely expressed at low levels, with highest expression in the spleen, thymus and adrenal gland, and lower in the kidney, brain and peripheral blood leukocytes.

Its subcellular location is the cell membrane. Functionally, receptor for cysteinyl leukotrienes. The response is mediated via a G-protein that activates a phosphatidylinositol-calcium second messenger system. The rank order of affinities for the leukotrienes is LTC4 = LTD4 &gt;&gt; LTE4. The protein is Cysteinyl leukotriene receptor 2 (Cysltr2) of Mus musculus (Mouse).